The primary structure comprises 374 residues: N-acetyldiaminopimelate deacetylase (374 aa).

Asp69 is an active-site residue. Glu128 serves as the catalytic Proton acceptor.

The protein belongs to the peptidase M20A family. N-acetyldiaminopimelate deacetylase subfamily.

It catalyses the reaction N-acetyl-(2S,6S)-2,6-diaminopimelate + H2O = (2S,6S)-2,6-diaminopimelate + acetate. It functions in the pathway amino-acid biosynthesis; L-lysine biosynthesis via DAP pathway; LL-2,6-diaminopimelate from (S)-tetrahydrodipicolinate (acetylase route): step 3/3. Its function is as follows. Catalyzes the conversion of N-acetyl-diaminopimelate to diaminopimelate and acetate. The sequence is that of N-acetyldiaminopimelate deacetylase (ykuR) from Bacillus subtilis (strain 168).